A 344-amino-acid chain; its full sequence is DNA-directed RNA polymerase subunit alpha (344 aa).

Residues 1 to 246 (MLVEKFLKDF…EFLFPLVDFE (246 aa)) are alpha N-terminal domain (alpha-NTD). Residues 259-344 (ESSNLLDMSI…VLSKNVKISE (86 aa)) form an alpha C-terminal domain (alpha-CTD) region.

The protein belongs to the RNA polymerase alpha chain family. In terms of assembly, homodimer. The RNAP catalytic core consists of 2 alpha, 1 beta, 1 beta' and 1 omega subunit. When a sigma factor is associated with the core the holoenzyme is formed, which can initiate transcription.

The enzyme catalyses RNA(n) + a ribonucleoside 5'-triphosphate = RNA(n+1) + diphosphate. Functionally, DNA-dependent RNA polymerase catalyzes the transcription of DNA into RNA using the four ribonucleoside triphosphates as substrates. This is DNA-directed RNA polymerase subunit alpha from Borreliella burgdorferi (strain ATCC 35210 / DSM 4680 / CIP 102532 / B31) (Borrelia burgdorferi).